The sequence spans 256 residues: 1-(5-phosphoribosyl)-5-[(5-phosphoribosylamino)methylideneamino] imidazole-4-carboxamide isomerase (256 aa).

The active-site Proton acceptor is Asp-8. The Proton donor role is filled by Asp-129.

Belongs to the HisA/HisF family.

The protein resides in the cytoplasm. The catalysed reaction is 1-(5-phospho-beta-D-ribosyl)-5-[(5-phospho-beta-D-ribosylamino)methylideneamino]imidazole-4-carboxamide = 5-[(5-phospho-1-deoxy-D-ribulos-1-ylimino)methylamino]-1-(5-phospho-beta-D-ribosyl)imidazole-4-carboxamide. Its pathway is amino-acid biosynthesis; L-histidine biosynthesis; L-histidine from 5-phospho-alpha-D-ribose 1-diphosphate: step 4/9. The chain is 1-(5-phosphoribosyl)-5-[(5-phosphoribosylamino)methylideneamino] imidazole-4-carboxamide isomerase from Picosynechococcus sp. (strain ATCC 27264 / PCC 7002 / PR-6) (Agmenellum quadruplicatum).